The primary structure comprises 128 residues: Ribosome-binding factor A (128 aa).

It belongs to the RbfA family. Monomer. Binds 30S ribosomal subunits, but not 50S ribosomal subunits or 70S ribosomes.

Its subcellular location is the cytoplasm. In terms of biological role, one of several proteins that assist in the late maturation steps of the functional core of the 30S ribosomal subunit. Associates with free 30S ribosomal subunits (but not with 30S subunits that are part of 70S ribosomes or polysomes). Required for efficient processing of 16S rRNA. May interact with the 5'-terminal helix region of 16S rRNA. This is Ribosome-binding factor A from Haemophilus influenzae (strain ATCC 51907 / DSM 11121 / KW20 / Rd).